Reading from the N-terminus, the 385-residue chain is Podocin (385 aa).

Basic and acidic residues predominate over residues 1–27; it reads MDSRARSSSREAHGRSSRSSSRDDKKA. Residues 1–64 are disordered; the sequence is MDSRARSSSR…GEPRAPAATA (64 aa). Residues 1–104 lie on the Cytoplasmic side of the membrane; that stretch reads MDSRARSSSR…IKPSGLGACE (104 aa). Cys103 is lipidated: S-palmitoyl cysteine. The chain crosses the membrane as a helical span at residues 105-125; it reads WLLVLASLIFIIMTFPFSIWF. The Extracellular portion of the chain corresponds to 126–385; that stretch reads CIKVVQEYER…NPKKKDSPML (260 aa). The segment covering 357–370 has biased composition (polar residues); that stretch reads NRAQGSINYPSSSK. Positions 357–385 are disordered; sequence NRAQGSINYPSSSKPVEPLNPKKKDSPML. Basic and acidic residues predominate over residues 376–385; that stretch reads NPKKKDSPML.

The protein belongs to the band 7/mec-2 family. Interacts with nephrin/NPHS1, KIRRL1 and CD2AP. Interacts with DDN.

The protein resides in the membrane. In terms of biological role, plays a role in the regulation of glomerular permeability, acting probably as a linker between the plasma membrane and the cytoskeleton. This Mus musculus (Mouse) protein is Podocin (Nphs2).